Reading from the N-terminus, the 122-residue chain is Basic phospholipase A2 Ts-G6D49 (122 aa).

Disulfide bonds link cysteine 26–cysteine 115, cysteine 28–cysteine 44, cysteine 43–cysteine 95, cysteine 49–cysteine 122, cysteine 50–cysteine 88, cysteine 57–cysteine 81, and cysteine 75–cysteine 86. Positions 27, 29, and 31 each coordinate Ca(2+). Residue histidine 47 is part of the active site. Ca(2+) is bound at residue aspartate 48. Aspartate 89 is an active-site residue.

It depends on Ca(2+) as a cofactor. As to expression, expressed by the venom gland.

Its subcellular location is the secreted. The catalysed reaction is a 1,2-diacyl-sn-glycero-3-phosphocholine + H2O = a 1-acyl-sn-glycero-3-phosphocholine + a fatty acid + H(+). Functionally, snake venom phospholipase A2 that induces fast and sustaining local edema a few hours after injection (5-10 ug) in the hind paw, and prolongs the coagulation time of human plasma. Exhibits moderate hydrolytic activities and prefers the zwitterionic micelles (dPPC with Triton X-100) to the anionic micelles (dPPC with deoxycholate). PLA2 catalyzes the calcium-dependent hydrolysis of the 2-acyl groups in 3-sn-phosphoglycerides. This is Basic phospholipase A2 Ts-G6D49 from Trimeresurus stejnegeri (Chinese green tree viper).